Reading from the N-terminus, the 732-residue chain is Catalase-peroxidase (732 aa).

An N-terminal signal peptide occupies residues 1–15 (MSTESKCPFAGGAYA). The tryptophyl-tyrosyl-methioninium (Trp-Tyr) (with M-245) cross-link spans 96–219 (WHSAGTYRIY…LGAVQMGLIY (124 aa)). Residue His-97 is the Proton acceptor of the active site. The segment at residues 219–245 (YVNPEGPNGNPDPLASARDIRETFARM) is a cross-link (tryptophyl-tyrosyl-methioninium (Tyr-Met) (with W-96)). Residue His-260 coordinates heme b.

Belongs to the peroxidase family. Peroxidase/catalase subfamily. As to quaternary structure, homodimer or homotetramer. Heme b serves as cofactor. Post-translationally, formation of the three residue Trp-Tyr-Met cross-link is important for the catalase, but not the peroxidase activity of the enzyme.

It carries out the reaction H2O2 + AH2 = A + 2 H2O. The catalysed reaction is 2 H2O2 = O2 + 2 H2O. Bifunctional enzyme with both catalase and broad-spectrum peroxidase activity. The protein is Catalase-peroxidase of Acidobacterium capsulatum (strain ATCC 51196 / DSM 11244 / BCRC 80197 / JCM 7670 / NBRC 15755 / NCIMB 13165 / 161).